The following is a 455-amino-acid chain: Probable cytosolic iron-sulfur protein assembly protein 1 (455 aa).

7 WD repeats span residues 31–70, 90–129, 163–202, 208–247, 253–292, 318–365, and 380–453; these read GHSS…TTSA, GHQR…DGSS, GHES…EFEC, EHSQ…DWFC, GHES…QCEA, YHDR…DEKS, and HASA…YAAT.

This sequence belongs to the WD repeat CIA1 family.

Essential component of the cytosolic iron-sulfur (Fe/S) protein assembly machinery. Required for the maturation of extramitochondrial Fe/S proteins. This is Probable cytosolic iron-sulfur protein assembly protein 1 from Mycosarcoma maydis (Corn smut fungus).